The chain runs to 216 residues: MNSNKMTINLALFGMTQSGKSSAGNIILGSTDFHSSFAPCSVTRDCSLGRSCHFRSFMRRGGQEVTLQVQVLDTPGYPHSRLSKKHVRQEVREALAHHFGQEGLHLALLVQRADVPLCGQEESSPVQMIQELLGHTWMNYTAILFTHAEKIEEAGFNEDEYLREASETLLKLLNSIQHRYIFQYKKGNSLSEQRLKILERIIEFVKENCYQVLTFK.

The region spanning lysine 5–lysine 216 is the AIG1-type G domain. GTP-binding positions include glycine 14–serine 22, serine 35, and histidine 147–glutamate 149.

The protein belongs to the TRAFAC class TrmE-Era-EngA-EngB-Septin-like GTPase superfamily. AIG1/Toc34/Toc159-like paraseptin GTPase family. IAN subfamily.

The protein is GTPase IMAP family member GIMD1 (GIMD1) of Bos taurus (Bovine).